Reading from the N-terminus, the 477-residue chain is Glycogen synthase (477 aa).

Position 15 (lysine 15) interacts with ADP-alpha-D-glucose.

The protein belongs to the glycosyltransferase 1 family. Bacterial/plant glycogen synthase subfamily.

The catalysed reaction is [(1-&gt;4)-alpha-D-glucosyl](n) + ADP-alpha-D-glucose = [(1-&gt;4)-alpha-D-glucosyl](n+1) + ADP + H(+). The protein operates within glycan biosynthesis; glycogen biosynthesis. Synthesizes alpha-1,4-glucan chains using ADP-glucose. The chain is Glycogen synthase from Shigella sonnei (strain Ss046).